Here is a 221-residue protein sequence, read N- to C-terminus: N-(5'-phosphoribosyl)anthranilate isomerase (221 aa).

The protein belongs to the TrpF family.

The enzyme catalyses N-(5-phospho-beta-D-ribosyl)anthranilate = 1-(2-carboxyphenylamino)-1-deoxy-D-ribulose 5-phosphate. It participates in amino-acid biosynthesis; L-tryptophan biosynthesis; L-tryptophan from chorismate: step 3/5. This Chlorobaculum tepidum (strain ATCC 49652 / DSM 12025 / NBRC 103806 / TLS) (Chlorobium tepidum) protein is N-(5'-phosphoribosyl)anthranilate isomerase.